The chain runs to 357 residues: Cyclin-dependent kinase-like 1 (357 aa).

The region spanning 4-287 is the Protein kinase domain; that stretch reads YEKIGKIGEG…CEQLLHHPYF (284 aa). ATP-binding positions include 10–18 and Lys33; that span reads IGEGSYGVV. The [NKR]KIAxRE motif lies at 45–51; that stretch reads KKIALRE. The active-site Proton acceptor is the Asp126.

This sequence belongs to the protein kinase superfamily. CMGC Ser/Thr protein kinase family. CDC2/CDKX subfamily. In terms of tissue distribution, highly expressed in kidney, and to a lower extent in ovary.

It localises to the cytoplasm. Its subcellular location is the nucleus. It catalyses the reaction L-seryl-[protein] + ATP = O-phospho-L-seryl-[protein] + ADP + H(+). The enzyme catalyses L-threonyl-[protein] + ATP = O-phospho-L-threonyl-[protein] + ADP + H(+). This is Cyclin-dependent kinase-like 1 from Homo sapiens (Human).